The following is a 581-amino-acid chain: Leucine-rich repeat-containing protein 47 (581 aa).

LRR repeat units lie at residues 78–97 (QLHS…SPEL), 102–123 (ALRV…EGLG), 132–154 (QLQS…ARCA), 156–177 (RLQS…LFRP), 182–204 (LLSE…AHLA), 205–227 (SLKT…ADCP), and 228–248 (KLKE…EKMV). Residues 262–301 (AGGRGGRSKGRQEASEKEDRKKRRERKQHRESGEGEEEVA) are disordered. Over residues 271-280 (GRQEASEKED) the composition is skewed to basic and acidic residues. 3 positions are modified to phosphoserine: Ser314, Ser430, and Ser519. The stretch at 401-436 (LGRKEAKAKELVRQLQLEAEEQRKQKKRQSVSGLHR) forms a coiled coil.

This chain is Leucine-rich repeat-containing protein 47 (Lrrc47), found in Mus musculus (Mouse).